The sequence spans 604 residues: Aspartate--tRNA(Asp/Asn) ligase (604 aa).

Residue E175 participates in L-aspartate binding. An aspartate region spans residues 199–202 (QQFK). L-aspartate-binding residues include R221 and H456. 221-223 (RDE) contacts ATP. E496 is a binding site for ATP. Residue R503 coordinates L-aspartate. 548–551 (GVDR) serves as a coordination point for ATP.

It belongs to the class-II aminoacyl-tRNA synthetase family. Type 1 subfamily. Homodimer.

It localises to the cytoplasm. The catalysed reaction is tRNA(Asx) + L-aspartate + ATP = L-aspartyl-tRNA(Asx) + AMP + diphosphate. In terms of biological role, aspartyl-tRNA synthetase with relaxed tRNA specificity since it is able to aspartylate not only its cognate tRNA(Asp) but also tRNA(Asn). Reaction proceeds in two steps: L-aspartate is first activated by ATP to form Asp-AMP and then transferred to the acceptor end of tRNA(Asp/Asn). This chain is Aspartate--tRNA(Asp/Asn) ligase, found in Methylorubrum extorquens (strain CM4 / NCIMB 13688) (Methylobacterium extorquens).